Here is a 508-residue protein sequence, read N- to C-terminus: Photosystem II CP47 reaction center protein (508 aa).

6 consecutive transmembrane segments (helical) span residues 21–36 (AVHL…WAGS), 101–115 (ITLS…IWHW), 140–156 (GIHL…FGAF), 203–218 (IAAG…FHLS), 237–252 (VLSS…AFVV), and 457–472 (TFAL…HGAR).

Belongs to the PsbB/PsbC family. PsbB subfamily. As to quaternary structure, PSII is composed of 1 copy each of membrane proteins PsbA, PsbB, PsbC, PsbD, PsbE, PsbF, PsbH, PsbI, PsbJ, PsbK, PsbL, PsbM, PsbT, PsbX, PsbY, PsbZ, Psb30/Ycf12, at least 3 peripheral proteins of the oxygen-evolving complex and a large number of cofactors. It forms dimeric complexes. It depends on Binds multiple chlorophylls. PSII binds additional chlorophylls, carotenoids and specific lipids. as a cofactor.

Its subcellular location is the plastid. The protein resides in the chloroplast thylakoid membrane. One of the components of the core complex of photosystem II (PSII). It binds chlorophyll and helps catalyze the primary light-induced photochemical processes of PSII. PSII is a light-driven water:plastoquinone oxidoreductase, using light energy to abstract electrons from H(2)O, generating O(2) and a proton gradient subsequently used for ATP formation. This Psilotum nudum (Whisk fern) protein is Photosystem II CP47 reaction center protein.